The following is a 101-amino-acid chain: MATIANPRDIIIAPVVSEKSYGLMEQNVYTFFVSTDANKTQIKIAIEEIFGVKVASVNTVNRAGKRKRSRTGFGTRKATKRAYVTLREGSDSIDIFNGSVA.

It belongs to the universal ribosomal protein uL23 family. In terms of assembly, part of the 50S ribosomal subunit. Contacts protein L29, and trigger factor when it is bound to the ribosome.

Functionally, one of the early assembly proteins it binds 23S rRNA. One of the proteins that surrounds the polypeptide exit tunnel on the outside of the ribosome. Forms the main docking site for trigger factor binding to the ribosome. The protein is Large ribosomal subunit protein uL23 of Corynebacterium glutamicum (strain R).